Reading from the N-terminus, the 172-residue chain is Signal peptidase complex catalytic subunit SEC11 (172 aa).

Topologically, residues 1 to 14 are cytoplasmic; it reads MLSSLGNPRQAATQ. A helical; Signal-anchor for type II membrane protein transmembrane segment spans residues 15 to 35; sequence LLNFALILSTAFMMWKGLSVA. Residues 36–172 lie on the Lumenal side of the membrane; it reads TDSPSPIVVV…MGLMVVLQRE (137 aa). Residues Ser-49, His-90, and Asp-115 each act as charge relay system in the active site. The segment at 158–169 is C-terminal short (CTS) helix; sequence AMLGIMGLMVVL.

This sequence belongs to the peptidase S26B family. Component of the signal peptidase complex (SPC) composed of a catalytic subunit SEC11 and three accessory subunits SPC1, SPC2 and SPC3. The complex induces a local thinning of the ER membrane which is used to measure the length of the signal peptide (SP) h-region of protein substrates. This ensures the selectivity of the complex towards h-regions shorter than 18-20 amino acids. SPC associates with the translocon complex.

The protein resides in the endoplasmic reticulum membrane. The enzyme catalyses Cleavage of hydrophobic, N-terminal signal or leader sequences from secreted and periplasmic proteins.. In terms of biological role, catalytic component of the signal peptidase complex (SPC) which catalyzes the cleavage of N-terminal signal sequences from nascent proteins as they are translocated into the lumen of the endoplasmic reticulum. Specifically cleaves N-terminal signal peptides that contain a hydrophobic alpha-helix (h-region) shorter than 18-20 amino acids. The chain is Signal peptidase complex catalytic subunit SEC11 (SEC11) from Pyricularia oryzae (strain 70-15 / ATCC MYA-4617 / FGSC 8958) (Rice blast fungus).